A 477-amino-acid polypeptide reads, in one-letter code: Methylenetetrahydrofolate--tRNA-(uracil-5-)-methyltransferase TrmFO (477 aa).

G14–G19 contacts FAD.

This sequence belongs to the MnmG family. TrmFO subfamily. FAD serves as cofactor.

Its subcellular location is the cytoplasm. It carries out the reaction uridine(54) in tRNA + (6R)-5,10-methylene-5,6,7,8-tetrahydrofolate + NADH + H(+) = 5-methyluridine(54) in tRNA + (6S)-5,6,7,8-tetrahydrofolate + NAD(+). The catalysed reaction is uridine(54) in tRNA + (6R)-5,10-methylene-5,6,7,8-tetrahydrofolate + NADPH + H(+) = 5-methyluridine(54) in tRNA + (6S)-5,6,7,8-tetrahydrofolate + NADP(+). Functionally, catalyzes the folate-dependent formation of 5-methyl-uridine at position 54 (M-5-U54) in all tRNAs. The polypeptide is Methylenetetrahydrofolate--tRNA-(uracil-5-)-methyltransferase TrmFO (Rhizobium etli (strain ATCC 51251 / DSM 11541 / JCM 21823 / NBRC 15573 / CFN 42)).